The primary structure comprises 221 residues: MSTEPNSPFVDDPLSAVDARILGSLVEKQATTPETYPLTLNALVLACNQKTSRDPVMNLTPGQVGQSLRQLEGRGLVRLVMGSRADRWEHTLGKGLELVAPQVALLGLLFLRGPQTLSELLTRSNRLHDFDDVEQIRHHLERLAGRGLAVHLERRAGQREERYMHLLGSQADLEAAVEAMGSDPERAAPAALSADAEARIAELETRLAALEERLARLEGGA.

This sequence belongs to the UPF0502 family.

The chain is UPF0502 protein PA14_19450 from Pseudomonas aeruginosa (strain UCBPP-PA14).